Reading from the N-terminus, the 354-residue chain is Neuronal growth regulator 1 (354 aa).

The first 37 residues, 1-37 (MDMMLLVQGACCSNQWLAAVLLSLCCLLPSCLPAGQS), serve as a signal peptide directing secretion. Ig-like C2-type domains are found at residues 38 to 134 (VDFP…VHLT), 139 to 221 (PKIY…KVVV), and 225 to 313 (PTIQ…LPLN). The cysteines at positions 60 and 118 are disulfide-linked. Asparagine 73 and asparagine 155 each carry an N-linked (GlcNAc...) asparagine glycan. 2 disulfide bridges follow: cysteine 160-cysteine 203 and cysteine 245-cysteine 297. Tyrosine 187 is subject to Phosphotyrosine. Residues asparagine 275, asparagine 286, asparagine 294, and asparagine 307 are each glycosylated (N-linked (GlcNAc...) asparagine). The GPI-anchor amidated glycine moiety is linked to residue glycine 324. Positions 325–354 (SADVLFSCWYLVLTLSSFTSIFYLKNAILQ) are cleaved as a propeptide — removed in mature form.

Belongs to the immunoglobulin superfamily. IgLON family.

It is found in the cell membrane. Its function is as follows. May be involved in cell-adhesion. May function as a trans-neural growth-promoting factor in regenerative axon sprouting in the mammalian brain. The chain is Neuronal growth regulator 1 (NEGR1) from Homo sapiens (Human).